The primary structure comprises 457 residues: UDP-N-acetylmuramate--L-alanine ligase (457 aa).

109–115 is an ATP binding site; the sequence is GTDGKTT.

It belongs to the MurCDEF family.

The protein resides in the cytoplasm. It carries out the reaction UDP-N-acetyl-alpha-D-muramate + L-alanine + ATP = UDP-N-acetyl-alpha-D-muramoyl-L-alanine + ADP + phosphate + H(+). Its pathway is cell wall biogenesis; peptidoglycan biosynthesis. Its function is as follows. Cell wall formation. The protein is UDP-N-acetylmuramate--L-alanine ligase (murC) of Thermotoga maritima (strain ATCC 43589 / DSM 3109 / JCM 10099 / NBRC 100826 / MSB8).